A 311-amino-acid polypeptide reads, in one-letter code: Ribosomal RNA small subunit methyltransferase H (311 aa).

S-adenosyl-L-methionine is bound by residues 32-34 (AGH), D52, F79, D100, and Q107.

It belongs to the methyltransferase superfamily. RsmH family.

The protein localises to the cytoplasm. The enzyme catalyses cytidine(1402) in 16S rRNA + S-adenosyl-L-methionine = N(4)-methylcytidine(1402) in 16S rRNA + S-adenosyl-L-homocysteine + H(+). In terms of biological role, specifically methylates the N4 position of cytidine in position 1402 (C1402) of 16S rRNA. In Staphylococcus aureus (strain bovine RF122 / ET3-1), this protein is Ribosomal RNA small subunit methyltransferase H.